We begin with the raw amino-acid sequence, 433 residues long: MSKKLFIQTLGCAMNVRDSEHMIAELEAKEGYTLTDDPKEADLILINTCSVREKPERKLFSEIGQFSKEKKEEAKIGVCGCTASHLGSEILKKAPSVSFVLGARNVSKISRVIHQEKAVEVATDYDDSSYVFATGSRNDYKAMVNISIGCDKKCAYCIVPHTRGQEISVPSDLILGEARRLASAGVKEILLLGQNVNHYGRRFSSAHPKISFTELLRELSQVEGIERLRFTSPHPLHMDDEFLEEFASNPKICKSIHMPLQSGSTRILSLMRRGYSQEWFINRVERLKALAPETTIGTDIIVGFPGESEEDFLGTMEVLERVRFETLYSFVYSPRPHTEAASWENLVDEEVASERLHRLQARHKEILEELNQKEVGAIHSVLWEHQRRDEGWCEGRTDTGKMVRMKGGEEFLGRITPVRIKEAYRAFLIGEPL.

The MTTase N-terminal domain occupies 3–118; the sequence is KKLFIQTLGC…ISRVIHQEKA (116 aa). Residues cysteine 12, cysteine 49, cysteine 81, cysteine 150, cysteine 154, and cysteine 157 each coordinate [4Fe-4S] cluster. Positions 136 to 369 constitute a Radical SAM core domain; sequence SRNDYKAMVN…QARHKEILEE (234 aa). A TRAM domain is found at 372–433; it reads QKEVGAIHSV…YRAFLIGEPL (62 aa).

The protein belongs to the methylthiotransferase family. MiaB subfamily. Monomer. [4Fe-4S] cluster is required as a cofactor.

Its subcellular location is the cytoplasm. It carries out the reaction N(6)-dimethylallyladenosine(37) in tRNA + (sulfur carrier)-SH + AH2 + 2 S-adenosyl-L-methionine = 2-methylsulfanyl-N(6)-dimethylallyladenosine(37) in tRNA + (sulfur carrier)-H + 5'-deoxyadenosine + L-methionine + A + S-adenosyl-L-homocysteine + 2 H(+). Functionally, catalyzes the methylthiolation of N6-(dimethylallyl)adenosine (i(6)A), leading to the formation of 2-methylthio-N6-(dimethylallyl)adenosine (ms(2)i(6)A) at position 37 in tRNAs that read codons beginning with uridine. The polypeptide is tRNA-2-methylthio-N(6)-dimethylallyladenosine synthase (Wolinella succinogenes (strain ATCC 29543 / DSM 1740 / CCUG 13145 / JCM 31913 / LMG 7466 / NCTC 11488 / FDC 602W) (Vibrio succinogenes)).